The primary structure comprises 750 residues: Signal transducer and activator of transcription 1-alpha/beta (750 aa).

Residue Ser2 is modified to N-acetylserine. Residues Lys114, Lys175, Lys296, Lys366, Lys525, and Lys637 each carry the N6-methyllysine modification. The stretch at 136–317 (LDKQKELDSK…LFQQLIQSSF (182 aa)) forms a coiled coil. The 98-residue stretch at 573–670 (WNDGCIMGFI…ENPLKYLYPN (98 aa)) folds into the SH2 domain. Glu657 is subject to ADP-ribosyl glutamic acid; by PARP14. The residue at position 665 (Lys665) is an N6-methyllysine. Phosphotyrosine; by JAK1, JAK2 or TYK2 is present on Tyr701. A Glycyl lysine isopeptide (Lys-Gly) (interchain with G-Cter in SUMO1); alternate cross-link involves residue Lys703. Residue Lys703 forms a Glycyl lysine isopeptide (Lys-Gly) (interchain with G-Cter in SUMO2); alternate linkage. Glu705 carries the post-translational modification ADP-ribosyl glutamic acid; by PARP14. Ser708 carries the phosphoserine; by IKKE modification. Residue Ser727 is modified to Phosphoserine; by CAMK2 and MAPK14. Position 745 is a phosphoserine; by IKKE (Ser745). A Phosphothreonine; by IKKB modification is found at Thr749.

This sequence belongs to the transcription factor STAT family. In terms of assembly, isoform alpha homodimerizes upon IFN-gamma induced phosphorylation. Heterodimer with STAT2 upon IFN-alpha/beta induced phosphorylation. The heterodimer STAT1:STAT2 forms the interferon-stimulated gene factor 3 complex (ISGF3) with IRF9. Interacts (phosphorylated at Ser-727) with PIAS1; the interaction results in release of STAT1 from its target gene. Interacts with IFNAR1; the interaction requires the phosphorylation of IFNAR1 at 'Tyr-466'. Interacts with IFNAR2. Found in a complex with NMI and CREBBP/CBP. Interacts with NMI which is required for CREBBP/CBP recruitment to the complex. Interacts with PTK2/FAK1. Interacts with SRC. Interacts with ERBB4 (phosphorylated). Interacts with PARP9 and DTX3L independently of IFN-beta or IFN-gamma-mediated STAT1 'Tyr-701' phosphorylation. Interacts with histone acetyltransferase EP300/p300 in response to INF-gamma stimulation. Independently of its phosphorylation status, interacts with OTOP1. Interacts with IFNGR1. Interacts with STAT4. (Microbial infection) Interacts with Sendai virus C', C, Y1 and Y2 proteins, preventing activation of ISRE and GAS promoter. As to quaternary structure, (Microbial infection) Interacts with Nipah virus P, V and W proteins preventing activation of ISRE and GAS promoter. In terms of assembly, (Microbial infection) Interacts with Rabies virus phosphoprotein preventing activation of ISRE and GAS promoter. (Microbial infection) Interacts with HCV core protein; the interaction results in STAT1 degradation. As to quaternary structure, (Microbial infection) Interacts with ebolavirus protein VP24. In terms of assembly, (Microbial infection) Interacts with Epstein-Barr virus (EBV) tegument protein BGLF2; this interaction leads to STAT1 dephosphorylation and inhibition. (Microbial infection) Interacts (via N-terminus) with measles V protein; this interaction inhibits STAT1 phosphorylation by Jak1 and thereby the type I interferon signaling pathway. Post-translationally, deubiquitinated by USP13; leading to STAT1 stabilization and positive regulation of type I and type II IFN signalings. In terms of processing, phosphorylated on tyrosine and serine residues in response to a variety of cytokines/growth hormones including IFN-alpha, IFN-gamma, PDGF and EGF. Activated KIT promotes phosphorylation on tyrosine residues and subsequent translocation to the nucleus. Upon EGF stimulation, phosphorylation on Tyr-701 (lacking in beta form) by JAK1, JAK2 or TYK2 promotes dimerization and subsequent translocation to the nucleus. Growth hormone (GH) activates STAT1 signaling only via JAK2. Tyrosine phosphorylated in response to constitutively activated FGFR1, FGFR2, FGFR3 and FGFR4. Phosphorylation on Ser-727 by several kinases including MAPK14, ERK1/2, CAMK2/CAMKII and CK2 in response to IFN-gamma stimulation, is required for maximal transcriptional activity. Phosphorylated on Ser-727 by CAMK2/CAMKII in response to IFN-gamma stimulation and calcium mobilization, promoting activity. Phosphorylated by CAMK2/CAMKII in response to IFN-beta stimulation and calcium mobilization in epithelial cells, promoting activity. Phosphorylation on Ser-727 promotes sumoylation though increasing interaction with PIAS. Phosphorylation on Ser-727 by PRKCD induces apoptosis in response to DNA-damaging agents. Phosphorylated on tyrosine residues when PTK2/FAK1 is activated; most likely this is catalyzed by a SRC family kinase. Dephosphorylation on tyrosine residues by PTPN2 negatively regulates interferon-mediated signaling. Upon viral infection or IFN induction, phosphorylation on Ser-708 occurs much later than phosphorylation on Tyr-701 and is required for the binding of ISGF3 on the ISREs of a subset of IFN-stimulated genes IKBKE-dependent. Phosphorylation at Tyr-701 and Ser-708 are mutually exclusive, phosphorylation at Ser-708 requires previous dephosphorylation of Tyr-701. Phosphorylation at Thr-749 by IKBKB/IKKB promotes transcriptional activation of ARID5A and IL12B by STAT1. Phosphorylation at Thr-749 restricts interferon signaling and anti-inflammatory responses and promotes innate inflammatory responses. Sumoylated with SUMO1, SUMO2 and SUMO3. Sumoylation is enhanced by IFN-gamma-induced phosphorylation on Ser-727, and by interaction with PIAS proteins. Enhances the transactivation activity. Post-translationally, ISGylated. In terms of processing, mono-ADP-ribosylated at Glu-657 and Glu-705 by PARP14; ADP-ribosylation prevents phosphorylation at Tyr-701. However, the role of ADP-ribosylation in the prevention of phosphorylation has been called into question and the lack of phosphorylation may be due to sumoylation of Lys-703. Monomethylated at Lys-525 by SETD2; monomethylation is necessary for phosphorylation at Tyr-701, translocation into the nucleus and activation of the antiviral defense. Post-translationally, (Microbial infection) Ubiquitinated by Herpes simplex virus 2 E3 ubiquitin ligase ICP22.

The protein resides in the cytoplasm. It localises to the nucleus. Signal transducer and transcription activator that mediates cellular responses to interferons (IFNs), cytokine KITLG/SCF and other cytokines and other growth factors. Following type I IFN (IFN-alpha and IFN-beta) binding to cell surface receptors, signaling via protein kinases leads to activation of Jak kinases (TYK2 and JAK1) and to tyrosine phosphorylation of STAT1 and STAT2. The phosphorylated STATs dimerize and associate with ISGF3G/IRF-9 to form a complex termed ISGF3 transcription factor, that enters the nucleus. ISGF3 binds to the IFN stimulated response element (ISRE) to activate the transcription of IFN-stimulated genes (ISG), which drive the cell in an antiviral state. In response to type II IFN (IFN-gamma), STAT1 is tyrosine- and serine-phosphorylated. It then forms a homodimer termed IFN-gamma-activated factor (GAF), migrates into the nucleus and binds to the IFN gamma activated sequence (GAS) to drive the expression of the target genes, inducing a cellular antiviral state. Becomes activated in response to KITLG/SCF and KIT signaling. May mediate cellular responses to activated FGFR1, FGFR2, FGFR3 and FGFR4. Following bacterial lipopolysaccharide (LPS)-induced TLR4 endocytosis, phosphorylated at Thr-749 by IKBKB which promotes binding of STAT1 to the 5'-TTTGAGGC-3' sequence in the ARID5A promoter, resulting in transcriptional activation of ARID5A and subsequent ARID5A-mediated stabilization of IL6. Phosphorylation at Thr-749 also promotes binding of STAT1 to the 5'-TTTGAGTC-3' sequence in the IL12B promoter and activation of IL12B transcription. Involved in food tolerance in small intestine: associates with the Gasdermin-D, p13 cleavage product (13 kDa GSDMD) and promotes transcription of CIITA, inducing type 1 regulatory T (Tr1) cells in upper small intestine. In Homo sapiens (Human), this protein is Signal transducer and activator of transcription 1-alpha/beta (STAT1).